Here is a 405-residue protein sequence, read N- to C-terminus: Farnesyl pyrophosphate synthase (405 aa).

Mg(2+) is bound by residues Asp158 and Asp162. Positions 158 to 162 (DDLAD) match the DDXXD motif motif.

It belongs to the FPP/GGPP synthase family. Requires Mg(2+) as cofactor.

The catalysed reaction is isopentenyl diphosphate + (2E)-geranyl diphosphate = (2E,6E)-farnesyl diphosphate + diphosphate. The protein operates within pheromone biosynthesis. Farnesyl pyrophosphate synthase involved in murgantiol biosynthesis, a male-released aggregation pheromone, by catalyzing the formation of (2E,6E)-farnesyl diphosphate. In Murgantia histrionica (Harlequin bug), this protein is Farnesyl pyrophosphate synthase.